We begin with the raw amino-acid sequence, 75 residues long: MTSMKLHIVALCIIVSFLVNVQSTRIMDASSDCEFKGPCHKKEDCYDSCGVNKPPFNNAICVPGRDSFQCCCILS.

Positions 1–23 (MTSMKLHIVALCIIVSFLVNVQS) are cleaved as a signal peptide. 4 disulfides stabilise this stretch: C33/C72, C39/C61, C45/C70, and C49/C71.

It belongs to the DEFL family.

It is found in the secreted. In Arabidopsis thaliana (Mouse-ear cress), this protein is Putative defensin-like protein 271.